A 124-amino-acid polypeptide reads, in one-letter code: Urease subunit beta (124 aa).

Belongs to the urease beta subunit family. Heterotrimer of UreA (gamma), UreB (beta) and UreC (alpha) subunits. Three heterotrimers associate to form the active enzyme.

Its subcellular location is the cytoplasm. It catalyses the reaction urea + 2 H2O + H(+) = hydrogencarbonate + 2 NH4(+). It participates in nitrogen metabolism; urea degradation; CO(2) and NH(3) from urea (urease route): step 1/1. This Halalkalibacterium halodurans (strain ATCC BAA-125 / DSM 18197 / FERM 7344 / JCM 9153 / C-125) (Bacillus halodurans) protein is Urease subunit beta.